The primary structure comprises 353 residues: GDSL esterase/lipase At5g03810 (353 aa).

The signal sequence occupies residues 1–24 (MKMFITMSMCLSVIACFYAGVGTG). Catalysis depends on Ser-37, which acts as the Nucleophile. Residues Asn-100, Asn-255, Asn-256, Asn-260, and Asn-320 are each glycosylated (N-linked (GlcNAc...) asparagine). Active-site residues include Asp-328 and His-331.

It belongs to the 'GDSL' lipolytic enzyme family.

It is found in the secreted. This chain is GDSL esterase/lipase At5g03810, found in Arabidopsis thaliana (Mouse-ear cress).